The primary structure comprises 467 residues: 2-succinylbenzoate--CoA ligase (467 aa).

This sequence belongs to the ATP-dependent AMP-binding enzyme family. MenE subfamily.

It catalyses the reaction 2-succinylbenzoate + ATP + CoA = 2-succinylbenzoyl-CoA + AMP + diphosphate. It functions in the pathway quinol/quinone metabolism; 1,4-dihydroxy-2-naphthoate biosynthesis; 1,4-dihydroxy-2-naphthoate from chorismate: step 5/7. It participates in quinol/quinone metabolism; menaquinone biosynthesis. In terms of biological role, converts 2-succinylbenzoate (OSB) to 2-succinylbenzoyl-CoA (OSB-CoA). In Listeria monocytogenes serovar 1/2a (strain ATCC BAA-679 / EGD-e), this protein is 2-succinylbenzoate--CoA ligase.